A 266-amino-acid chain; its full sequence is Integral membrane protein 2B (266 aa).

At 1–54 the chain is on the cytoplasmic side; that stretch reads MVKVTFNSALAQKEAKKDESKSGEEALIIPPDAVAVDCKDPDEVVPVGQRRAWC. Residues 55-75 traverse the membrane as a helical; Signal-anchor for type II membrane protein segment; that stretch reads WCMCFGLAFMLAGVILGGAYL. Over 76-266 the chain is Lumenal; that stretch reads YKYFAFQPDD…RFAVETLICP (191 aa). Positions 102–134 are necessary for interaction with APP and inhibitor effects on APP processing; that stretch reads EPSADAPASRYQTIEENIKIFEEDEVEFISVPV. The 95-residue stretch at 137–231 folds into the BRICHOS domain; the sequence is FADSDPANIV…LCHDKETYKL (95 aa). Disulfide bonds link Cys-164–Cys-223 and Cys-248–Cys-265. Residue Asn-170 is glycosylated (N-linked (GlcNAc...) asparagine).

Belongs to the ITM2 family. Homodimer; disulfide-linked. Interacts with SPPL2A and SPPL2B. Interacts with APP. Mature BRI2 (mBRI2) interacts with the APP amyloid-beta A4 protein; the interaction occurs at the cell surface and in the endocytic compartments and enable alpha- and beta-secretase-induced APP cleavage inhibition. Mature BRI2 (mBRI2) interacts with the APP C99; the interaction occurs in the endocytic compartments and enable gamma-secretase-induced C99 cleavage inhibition. May form heterodimers with Bri23 peptide and APP amyloid-beta protein 40. Interacts with ADAM7 in sperm; the interaction increases following capacitation. In terms of processing, the ectodomain C-terminal part of the imBRI2 is processed by furin producing a secreted Bri23 peptide and a mature BRI2, membrane form (mBRI2). The remaining part of the ectodomain of mBRI2 containing the BRICHOS domain is cleaved by ADAM10 and is secreted (BRI2C, soluble form). The membrane-bound N-terminal fragment (BRI2C, membrane form) is further proteolytically processed by SPPL2A and SPPL2B through regulated intramembrane proteolysis producing a secreted C-peptide and a BRI2 intracellular domain (BRI2 ICD) released in the cytosol. Shedding by ADAM10 facilitates intramembrane cleavage but is not absolutely required for BRI2 ICD generation. Glycosylation at Asn-170 is important for cell surface localization, but doesn't affect furin- and ADAM10-induced proteolytic processing.

It is found in the golgi apparatus membrane. The protein localises to the cell membrane. It localises to the endosome membrane. The protein resides in the secreted. In terms of biological role, plays a regulatory role in the processing of the amyloid-beta A4 precursor protein (APP) and acts as an inhibitor of the amyloid-beta peptide aggregation and fibrils deposition. Plays a role in the induction of neurite outgrowth. Functions as a protease inhibitor by blocking access of secretases to APP cleavage sites. Mature BRI2 (mBRI2) functions as a modulator of the amyloid-beta A4 precursor protein (APP) processing leading to a strong reduction in the secretion of secretase-processed amyloid-beta protein 40 and amyloid-beta protein 42. Its function is as follows. Bri23 peptide prevents aggregation of APP amyloid-beta protein 42 into toxic oligomers. The sequence is that of Integral membrane protein 2B (ITM2B) from Bos taurus (Bovine).